The sequence spans 856 residues: DNA gyrase subunit A (856 aa).

The region spanning 45–517 is the Topo IIA-type catalytic domain; that stretch reads LPDARDGLKP…DDGTVTHEDL (473 aa). Tyr-133 functions as the O-(5'-phospho-DNA)-tyrosine intermediate in the catalytic mechanism. A GyrA-box motif is present at residues 544-550; the sequence is QHRGGKG. Residues 822 to 856 form a disordered region; the sequence is TVASVDTHPRTDDSSEADSGDGESESENATATTPS. A compositionally biased stretch (acidic residues) spans 835-847; sequence SSEADSGDGESES.

The protein belongs to the type II topoisomerase GyrA/ParC subunit family. In terms of assembly, heterotetramer, composed of two GyrA and two GyrB chains. In the heterotetramer, GyrA contains the active site tyrosine that forms a transient covalent intermediate with DNA, while GyrB binds cofactors and catalyzes ATP hydrolysis.

It localises to the cytoplasm. The enzyme catalyses ATP-dependent breakage, passage and rejoining of double-stranded DNA.. In terms of biological role, a type II topoisomerase that negatively supercoils closed circular double-stranded (ds) DNA in an ATP-dependent manner to modulate DNA topology and maintain chromosomes in an underwound state. Negative supercoiling favors strand separation, and DNA replication, transcription, recombination and repair, all of which involve strand separation. Also able to catalyze the interconversion of other topological isomers of dsDNA rings, including catenanes and knotted rings. Type II topoisomerases break and join 2 DNA strands simultaneously in an ATP-dependent manner. This is DNA gyrase subunit A from Haloquadratum walsbyi (strain DSM 16790 / HBSQ001).